Consider the following 376-residue polypeptide: Formate dehydrogenase 1 (376 aa).

Substrate is bound by residues V97 and N121. NAD(+) contacts are provided by residues 176–177, D197, 244–248, T270, D296, and 325–328; these read RI, PLHKD, and HISG.

It belongs to the D-isomer specific 2-hydroxyacid dehydrogenase family. FDH subfamily. In terms of assembly, homodimer.

It localises to the cytoplasm. The catalysed reaction is formate + NAD(+) = CO2 + NADH. Its function is as follows. Catalyzes the NAD(+)-dependent oxidation of formate to carbon dioxide. Formate oxidation is the final step in the methanol oxidation pathway in methylotrophic microorganisms. Has a role in the detoxification of exogenous formate in non-methylotrophic organisms. The polypeptide is Formate dehydrogenase 1 (FDH1) (Saccharomyces cerevisiae (strain YJM789) (Baker's yeast)).